Reading from the N-terminus, the 269-residue chain is Tryptophan synthase alpha chain (269 aa).

Catalysis depends on proton acceptor residues glutamate 49 and aspartate 60.

The protein belongs to the TrpA family. Tetramer of two alpha and two beta chains.

It catalyses the reaction (1S,2R)-1-C-(indol-3-yl)glycerol 3-phosphate + L-serine = D-glyceraldehyde 3-phosphate + L-tryptophan + H2O. It functions in the pathway amino-acid biosynthesis; L-tryptophan biosynthesis; L-tryptophan from chorismate: step 5/5. Its function is as follows. The alpha subunit is responsible for the aldol cleavage of indoleglycerol phosphate to indole and glyceraldehyde 3-phosphate. The protein is Tryptophan synthase alpha chain of Cronobacter sakazakii (strain ATCC BAA-894) (Enterobacter sakazakii).